The primary structure comprises 153 residues: MEKLDKLSEAFKALLKQEKFGSQSEIVTALQELGFENINQSKVSRMLSKFGAVRTRNTKMEMVYQLPAELGVPTTSSPLKNLVVDIDHNDVLIVVKTSPGAAQLIARLLDSMGKSEGILGTIAGDDTIFITPTKVTPVEVLMQNVTELFESSF.

This sequence belongs to the ArgR family.

The protein localises to the cytoplasm. It functions in the pathway amino-acid biosynthesis; L-arginine biosynthesis [regulation]. Regulates arginine biosynthesis genes. This Actinobacillus pleuropneumoniae serotype 7 (strain AP76) protein is Arginine repressor.